The primary structure comprises 320 residues: 3'-5' exoribonuclease YhaM (320 aa).

A DNA-binding region (OB) is located at residues 18–90 (FLIKSATKAV…QLKIGSIRPT (73 aa)). The HD domain occupies 163–279 (HVVCMLNVAK…LHMIDNIDAK (117 aa)).

The protein belongs to the YhaM family.

Its function is as follows. Shows a 3'-5' exoribonuclease activity. In Halalkalibacterium halodurans (strain ATCC BAA-125 / DSM 18197 / FERM 7344 / JCM 9153 / C-125) (Bacillus halodurans), this protein is 3'-5' exoribonuclease YhaM.